The chain runs to 376 residues: Arginine/serine-rich coiled-coil protein 2 (376 aa).

Residues Met-1–Asn-171 are disordered. Positions Arg-13–Arg-52 are enriched in basic and acidic residues. Position 45 is a phosphoserine (Ser-45). The span at His-53–Ser-155 shows a compositional bias: basic residues. Residues Asn-171–Thr-214 adopt a coiled-coil conformation. Lys-317 participates in a covalent cross-link: Glycyl lysine isopeptide (Lys-Gly) (interchain with G-Cter in SUMO1); alternate. Residue Lys-317 forms a Glycyl lysine isopeptide (Lys-Gly) (interchain with G-Cter in SUMO2); alternate linkage. Ser-318 bears the Phosphoserine mark.

This sequence belongs to the RSRC2 family.

The polypeptide is Arginine/serine-rich coiled-coil protein 2 (Rsrc2) (Mus musculus (Mouse)).